The sequence spans 450 residues: tRNA modification GTPase MnmE (450 aa).

3 residues coordinate (6S)-5-formyl-5,6,7,8-tetrahydrofolate: arginine 23, glutamate 80, and arginine 123. One can recognise a TrmE-type G domain in the interval 219–372 (GLHVVLAGKP…LRQRLLQLAG (154 aa)). Asparagine 229 contributes to the K(+) binding site. Residues 229 to 234 (NVGKSS), 248 to 254 (TPIAGTT), 273 to 276 (DTAG), and 353 to 355 (SAR) each bind GTP. Serine 233 lines the Mg(2+) pocket. K(+) contacts are provided by threonine 248, isoleucine 250, and threonine 253. Residue threonine 254 coordinates Mg(2+). Lysine 450 contributes to the (6S)-5-formyl-5,6,7,8-tetrahydrofolate binding site.

It belongs to the TRAFAC class TrmE-Era-EngA-EngB-Septin-like GTPase superfamily. TrmE GTPase family. Homodimer. Heterotetramer of two MnmE and two MnmG subunits. K(+) is required as a cofactor.

It localises to the cytoplasm. In terms of biological role, exhibits a very high intrinsic GTPase hydrolysis rate. Involved in the addition of a carboxymethylaminomethyl (cmnm) group at the wobble position (U34) of certain tRNAs, forming tRNA-cmnm(5)s(2)U34. The protein is tRNA modification GTPase MnmE of Bordetella parapertussis (strain 12822 / ATCC BAA-587 / NCTC 13253).